We begin with the raw amino-acid sequence, 318 residues long: Porphobilinogen deaminase (318 aa).

Position 248 is an S-(dipyrrolylmethanemethyl)cysteine (cysteine 248).

Belongs to the HMBS family. In terms of assembly, monomer. Requires dipyrromethane as cofactor.

It carries out the reaction 4 porphobilinogen + H2O = hydroxymethylbilane + 4 NH4(+). It functions in the pathway porphyrin-containing compound metabolism; protoporphyrin-IX biosynthesis; coproporphyrinogen-III from 5-aminolevulinate: step 2/4. Tetrapolymerization of the monopyrrole PBG into the hydroxymethylbilane pre-uroporphyrinogen in several discrete steps. The chain is Porphobilinogen deaminase from Caulobacter sp. (strain K31).